Consider the following 159-residue polypeptide: uncharacterized protein (159 aa).

The next 3 membrane-spanning stretches (helical) occupy residues 10–30 (FLSM…SLFF), 52–72 (MLIL…VILL), and 96–116 (LTLI…PFVT).

The protein localises to the membrane. This is an uncharacterized protein from Escherichia coli (strain K12).